The sequence spans 486 residues: UDP-N-acetylmuramate--L-alanine ligase (486 aa).

ATP is bound at residue Gly-129–Thr-135.

This sequence belongs to the MurCDEF family.

It is found in the cytoplasm. The catalysed reaction is UDP-N-acetyl-alpha-D-muramate + L-alanine + ATP = UDP-N-acetyl-alpha-D-muramoyl-L-alanine + ADP + phosphate + H(+). The protein operates within cell wall biogenesis; peptidoglycan biosynthesis. Its function is as follows. Cell wall formation. The polypeptide is UDP-N-acetylmuramate--L-alanine ligase (Vibrio cholerae serotype O1 (strain ATCC 39541 / Classical Ogawa 395 / O395)).